The following is a 436-amino-acid chain: Trigger factor (436 aa).

One can recognise a PPIase FKBP-type domain in the interval 163–248; it reads GDTVVIDFDG…IHEVKEKQLP (86 aa).

This sequence belongs to the FKBP-type PPIase family. Tig subfamily.

The protein resides in the cytoplasm. The enzyme catalyses [protein]-peptidylproline (omega=180) = [protein]-peptidylproline (omega=0). In terms of biological role, involved in protein export. Acts as a chaperone by maintaining the newly synthesized protein in an open conformation. Functions as a peptidyl-prolyl cis-trans isomerase. The polypeptide is Trigger factor (Levilactobacillus brevis (strain ATCC 367 / BCRC 12310 / CIP 105137 / JCM 1170 / LMG 11437 / NCIMB 947 / NCTC 947) (Lactobacillus brevis)).